The sequence spans 478 residues: NADH oxidase (478 aa).

Residues 8–12 (GINHA), Asp33, Cys43, Val80, 111–114 (ASGA), Lys149, and Tyr177 each bind FAD. His11 (proton acceptor) is an active-site residue. Cys43 serves as the catalytic Redox-active. At Cys43 the chain carries Cysteine sulfinic acid (-SO2H). NAD(+) is bound by residues 170–185 (VAIVGSGYIGLELAEA), Asp197, and Gly264. FAD-binding positions include 295–305 (LNHKDVYVIGG), Leu322, Ala323, and Thr324. Residue Ala353 participates in NAD(+) binding. Phe450 is a binding site for FAD.

This sequence belongs to the class-III pyridine nucleotide-disulfide oxidoreductase family. Requires FAD as cofactor.

The catalysed reaction is 2 NADH + O2 + 2 H(+) = 2 NAD(+) + 2 H2O. Its function is as follows. Catalyzes the four-electron reduction of molecular oxygen to water. The polypeptide is NADH oxidase (nox) (Mycoplasma genitalium (strain ATCC 33530 / DSM 19775 / NCTC 10195 / G37) (Mycoplasmoides genitalium)).